The sequence spans 128 residues: Phosphoribosyl-AMP cyclohydrolase (128 aa).

Asp89 contacts Mg(2+). Zn(2+) is bound at residue Cys90. Mg(2+) is bound by residues Asp91 and Asp93. Positions 106 and 113 each coordinate Zn(2+).

It belongs to the PRA-CH family. Homodimer. The cofactor is Mg(2+). It depends on Zn(2+) as a cofactor.

It localises to the cytoplasm. It carries out the reaction 1-(5-phospho-beta-D-ribosyl)-5'-AMP + H2O = 1-(5-phospho-beta-D-ribosyl)-5-[(5-phospho-beta-D-ribosylamino)methylideneamino]imidazole-4-carboxamide. The protein operates within amino-acid biosynthesis; L-histidine biosynthesis; L-histidine from 5-phospho-alpha-D-ribose 1-diphosphate: step 3/9. In terms of biological role, catalyzes the hydrolysis of the adenine ring of phosphoribosyl-AMP. In Pyrobaculum calidifontis (strain DSM 21063 / JCM 11548 / VA1), this protein is Phosphoribosyl-AMP cyclohydrolase.